The sequence spans 775 residues: Tyrosine-protein phosphatase non-receptor type 12 (775 aa).

An N-acetylmethionine modification is found at methionine 1. Phosphoserine is present on serine 19. The region spanning 28 to 293 is the Tyrosine-protein phosphatase domain; that stretch reads FARDFMRLRR…ELVHRAIAQL (266 aa). Residues aspartate 199, 231–237, and glutamine 278 contribute to the substrate site; that span reads CSAGCGR. The Phosphocysteine intermediate role is filled by cysteine 231. Residues 322–341 are disordered; the sequence is SSIDSEKQDSPPPKPPRTRS. Phosphoserine is present on residues serine 331, serine 434, serine 448, and serine 467. The interval 344 to 437 is interaction with TGFB1I1; sequence VEGDAKEEIL…KLERNLSFEI (94 aa). The segment at 462-775 is disordered; sequence KIKSASSSVV…GPREPPSEWT (314 aa). Threonine 519 is modified (phosphothreonine). Phosphoserine is present on residues serine 550 and serine 567. The span at 558–573 shows a compositional bias: polar residues; that stretch reads NHSQTLKTVSSTPNST. Residue threonine 569 is modified to Phosphothreonine. A Phosphoserine modification is found at serine 596. Residue threonine 598 is modified to Phosphothreonine. Residues serine 603, serine 606, serine 608, and serine 613 each carry the phosphoserine modification. Residues 622-640 are compositionally biased toward low complexity; it reads TSISTASATVSPASSAESA. Position 673 is a phosphoserine (serine 673). Positions 692-711 are enriched in basic and acidic residues; it reads VRPEWHELPNQEWSEQRESE. Serine 748 carries the post-translational modification Phosphoserine. A compositionally biased stretch (basic and acidic residues) spans 766-775; the sequence is GPREPPSEWT.

It belongs to the protein-tyrosine phosphatase family. Non-receptor class 4 subfamily. As to quaternary structure, interacts with PSTPIP1 and TGFB1I1. Interacts with PTK2B/PYK2. Interacts with LPXN. Interacts with SORBS2; this interaction greatly enhances WASF1 dephosphorylation and might mediate partial translocation to focal adhesion sites. In terms of processing, phosphorylated by STK24/MST3 and this results in inhibition of its activity.

Its subcellular location is the cytoplasm. It is found in the cell junction. The protein resides in the focal adhesion. It localises to the cell projection. The protein localises to the podosome. The enzyme catalyses O-phospho-L-tyrosyl-[protein] + H2O = L-tyrosyl-[protein] + phosphate. Dephosphorylates a range of proteins, and thereby regulates cellular signaling cascades. Dephosphorylates cellular tyrosine kinases, such as ERBB2 and PTK2B/PYK2, and thereby regulates signaling via ERBB2 and PTK2B/PYK2. Selectively dephosphorylates ERBB2 phosphorylated at 'Tyr-1112', 'Tyr-1196', and/or 'Tyr-1248'. In Mus musculus (Mouse), this protein is Tyrosine-protein phosphatase non-receptor type 12 (Ptpn12).